The chain runs to 344 residues: MAPKEDSLALAEAWNHGFGFIKTSIVKTAVELGIPDILESRGAPVSIPELAAAVDCSADRLYRVMRFLAYHGIFKRTEPPPESTGGGSVYYAQTLVSRRLTRENLGPFVLLQGTMREPSGCVTAETLRMSKRPGLVDDNDSDRLYEDPVFSMKVFRDAMASHARMTTAAVIENYGEGFLGVGSLVDVGGSYGMALSMLVKAFPWLRGICFDLPEVVARASPLKGVEFVAGSMFESIPKADVVMLMFVLHNWSDEECVEILKRCKDAVPKNKGKVIIIDAVIDEDGNGDEFTGARLGLDVTMMANMFEGRERTYVEWAHIINEAGFRRHVVKNIKTLESVIEAYP.

Asp-211 is an S-adenosyl-L-methionine binding site. His-249 acts as the Proton acceptor in catalysis.

The protein belongs to the class I-like SAM-binding methyltransferase superfamily. Cation-independent O-methyltransferase family. In terms of assembly, homodimer.

The catalysed reaction is scutellarein + S-adenosyl-L-methionine = scutellarein 7-methyl ether + S-adenosyl-L-homocysteine. The enzyme catalyses 4',7,8-trihydroxyflavone + S-adenosyl-L-methionine = 4',8-dihydroxy-7-methoxyflavone + S-adenosyl-L-homocysteine. It carries out the reaction isorhamnetin + S-adenosyl-L-methionine = rhamnacene + S-adenosyl-L-homocysteine + H(+). It catalyses the reaction kaempferol + S-adenosyl-L-methionine = kaempferol 7-methyl ether + S-adenosyl-L-homocysteine + H(+). The catalysed reaction is (2S)-naringenin + S-adenosyl-L-methionine = (2S)-sakuranetin + S-adenosyl-L-homocysteine + H(+). The enzyme catalyses quercetin + S-adenosyl-L-methionine = rhamnetin + S-adenosyl-L-homocysteine + H(+). It carries out the reaction apigenin + S-adenosyl-L-methionine = genkwanin + S-adenosyl-L-homocysteine + H(+). It catalyses the reaction luteolin + S-adenosyl-L-methionine = luteolin 7-methyl ether + S-adenosyl-L-homocysteine + H(+). It participates in flavonoid metabolism. Flavonoid 7-O-methyltransferase involved in the biosynthesis of polymethoxylated flavonoids natural products such as pebrellin, aroma compounds which contribute to the flavor of peppermint, and exhibit pharmacological activities such as anti-allergic, anti-oxidant, antibacterial, anti-proliferative, and anti-inflammatory effects. Catalyzes S-adenosylmethionine-dependent regioselective 7-O-methylation of flavonoids; active on various hydroxylated flavonoid substrates, including luteolin (LUT), quercetin, kaempferol, isorhamnetin, apigenin (API), scutellarein (6-hydroxy-apigenin, 6-OH-API, SCU), 7,8,4'-trihydroxy-flavone and naringenin (NAR), and, with a lower efficiency, 7,8,3',4'-tetrahydroxy-flavone, taxifolin and hesperetin. This Mentha piperita (Peppermint) protein is Flavonoid 7-O-methyltransferase 1B.